A 198-amino-acid polypeptide reads, in one-letter code: Ribonuclease HII (198 aa).

The RNase H type-2 domain maps to 6 to 198 (EQIAGVDEVG…APCQASLLPD (193 aa)). A divalent metal cation is bound by residues Asp12, Glu13, and Asp108.

The protein belongs to the RNase HII family. It depends on Mn(2+) as a cofactor. Mg(2+) serves as cofactor.

It is found in the cytoplasm. It catalyses the reaction Endonucleolytic cleavage to 5'-phosphomonoester.. Endonuclease that specifically degrades the RNA of RNA-DNA hybrids. This chain is Ribonuclease HII, found in Acaryochloris marina (strain MBIC 11017).